The primary structure comprises 65 residues: Large ribosomal subunit protein bL35 (65 aa).

It belongs to the bacterial ribosomal protein bL35 family.

The polypeptide is Large ribosomal subunit protein bL35 (Thermotoga petrophila (strain ATCC BAA-488 / DSM 13995 / JCM 10881 / RKU-1)).